The sequence spans 652 residues: Threonine--tRNA ligase (652 aa).

The TGS domain maps to 1–63; it reads MAEISLTFPD…TESGDFQLIT (63 aa). A catalytic region spans residues 246–545; it reads DHRVIGRDLD…LIEMYKGAFP (300 aa). Residues cysteine 340, histidine 391, and histidine 522 each contribute to the Zn(2+) site.

Belongs to the class-II aminoacyl-tRNA synthetase family. Homodimer. Requires Zn(2+) as cofactor.

It localises to the cytoplasm. The enzyme catalyses tRNA(Thr) + L-threonine + ATP = L-threonyl-tRNA(Thr) + AMP + diphosphate + H(+). Catalyzes the attachment of threonine to tRNA(Thr) in a two-step reaction: L-threonine is first activated by ATP to form Thr-AMP and then transferred to the acceptor end of tRNA(Thr). Also edits incorrectly charged L-seryl-tRNA(Thr). The sequence is that of Threonine--tRNA ligase from Leuconostoc mesenteroides subsp. mesenteroides (strain ATCC 8293 / DSM 20343 / BCRC 11652 / CCM 1803 / JCM 6124 / NCDO 523 / NBRC 100496 / NCIMB 8023 / NCTC 12954 / NRRL B-1118 / 37Y).